Reading from the N-terminus, the 560-residue chain is Probable sulfate transporter Rv1739c (560 aa).

The required for sulfate transport in E.coli stretch occupies residues 1–436 (MIPTMTSAGW…VLGFVPGIAG (436 aa)). Transmembrane regions (helical) follow at residues 29-49 (VLAG…YATV), 51-71 (GLPP…YALL), 79-99 (IGPE…MAAG), 105-125 (AVLA…AGTA), 138-158 (VLVG…LGTI), 184-204 (WPTF…TRWA), 207-227 (APGP…MSLD), 256-276 (ALII…VLTA), 333-353 (LIAL…LAMF), 355-375 (IAAL…LSEF), and 394-414 (AAVL…LSIL). In terms of domain architecture, STAS spans 442–557 (DYPQAKRVPG…MTLPTAVQAF (116 aa)).

This sequence belongs to the SLC26A/SulP transporter (TC 2.A.53) family.

The protein localises to the cell membrane. Functionally, expression in E.coli induces sulfate uptake during early- to mid-log phase growth. Uptake is maximal at pH 6.0, is sulfate-specific, requires E.coli CysA and the transmembrane segment but not the STAS domain of the protein. The protein is Probable sulfate transporter Rv1739c of Mycobacterium tuberculosis (strain ATCC 25618 / H37Rv).